Here is a 579-residue protein sequence, read N- to C-terminus: Rho guanine nucleotide exchange factor 25 (579 aa).

2 disordered regions span residues 27 to 61 (AVPG…GERE) and 172 to 194 (VKAQ…EQKK). The region spanning 199–375 (RSMFVLSELV…CFVPKRCNDM (177 aa)) is the DH domain. The interval 317–338 (LGHRLQLSDLLIKPVQRIMKYQ) is important for binding to Rho GTPases. A PH domain is found at 380-499 (RLRGFEGKLT…ESQTNSLGRS (120 aa)). Positions 472 to 498 (SQRDFLNALQSPIEYQRRESQTNSLGR) are sufficient to bind activated GNAQ. Disordered stretches follow at residues 487–516 (QRRE…VSMH) and 546–579 (LSET…EDEL).

In terms of assembly, interacts with activated GNAQ and GNA11. Interacts with RHOA, CDC42 and RAC1. Interacts (via the DH domain) with POPDC1 (via the C-terminus cytoplasmic tail).

The protein localises to the cytoplasm. It is found in the myofibril. The protein resides in the sarcomere. It localises to the cell membrane. Functionally, may play a role in actin cytoskeleton reorganization in different tissues since its activation induces formation of actin stress fibers. It works as a guanine nucleotide exchange factor for Rho family of small GTPases. Links specifically G alpha q/11-coupled receptors to RHOA activation. May be an important regulator of processes involved in axon and dendrite formation. In neurons seems to be an exchange factor primarily for RAC1. Involved in skeletal myogenesis. The sequence is that of Rho guanine nucleotide exchange factor 25 (Arhgef25) from Rattus norvegicus (Rat).